The chain runs to 261 residues: Lysoplasmalogenase (261 aa).

8 helical membrane passes run 29-49 (GWVV…VIAL), 65-85 (PAFK…HPIG), 90-107 (WLVP…LLAI), 111-133 (TWAF…GALL), 146-166 (VAAV…FWPH), 172-192 (LTIP…TALL), 197-217 (TIWT…IGIG), and 227-247 (AVPI…GFFF).

Belongs to the TMEM86 family.

The protein localises to the cell membrane. The catalysed reaction is a 1-O-(1Z-alkenyl)-sn-glycero-3-phosphocholine + H2O = a 2,3-saturated aldehyde + sn-glycerol 3-phosphocholine. It catalyses the reaction a 1-O-(1Z-alkenyl)-sn-glycero-3-phosphoethanolamine + H2O = a 2,3-saturated aldehyde + sn-glycero-3-phosphoethanolamine. Its function is as follows. Specifically hydrolyzes the vinyl ether bond of lysoplasmenylcholine (pLPC) and lysoplasmenylethanolamine (pLPE) to release a fatty aldehyde and glycerophospho-choline or glycerophospho-ethanolamine. The protein is Lysoplasmalogenase of Mycobacterium bovis (strain ATCC BAA-935 / AF2122/97).